The primary structure comprises 468 residues: MAQTLYDKLWQSHVVETGDDGTTVLYIDRHLLHEVTSPQAFEGLKLAGRRPWRVSANLMVADHNVPTTDRANGIADPTSRLQVETLDGNAHEYGLTYFSMRDKRQGIVHVIGPEQGATLPGMTVVCGDSHTSTHGAFGCLAHGIGTSEVEHVLATQTLLAQKSKAMLVQVDGALPDGVTAKDIVLAVIGKIGTAGGTGYAIEFAGSTIRSLSMEGRMTICNMAIEAGARAGMVAVDDITINYVKGRPLSPVGPHWDRAVEYWRTLHSDAGAKFDLVVTLNAAEIKPQVSWGTSPEMVVAVDGRVPDPDKEKDPTKRDGMEKALIYMALKPNTPITDIRIDKVFIGSCTNSRIEDLRAAAAVVRGKYRASNVKLAMVVPGSGLVKEQAEREGLDKIFKAAGFEWREPGCSMCLAMNADRLEPGERCASTSNRNFEGRQGAGGRTHLVSPAMAAAAGIEGHFVDVRALKH.

Residues Cys-347, Cys-408, and Cys-411 each coordinate [4Fe-4S] cluster.

It belongs to the aconitase/IPM isomerase family. LeuC type 1 subfamily. In terms of assembly, heterodimer of LeuC and LeuD. The cofactor is [4Fe-4S] cluster.

It carries out the reaction (2R,3S)-3-isopropylmalate = (2S)-2-isopropylmalate. Its pathway is amino-acid biosynthesis; L-leucine biosynthesis; L-leucine from 3-methyl-2-oxobutanoate: step 2/4. In terms of biological role, catalyzes the isomerization between 2-isopropylmalate and 3-isopropylmalate, via the formation of 2-isopropylmaleate. In Janthinobacterium sp. (strain Marseille) (Minibacterium massiliensis), this protein is 3-isopropylmalate dehydratase large subunit.